A 400-amino-acid polypeptide reads, in one-letter code: Pectinesterase B (400 aa).

Residues Thr171 and Gln205 each contribute to the substrate site. The Proton donor role is filled by Asp228. Catalysis depends on Asp261, which acts as the Nucleophile. Residues Arg325 and Trp327 each coordinate substrate.

It belongs to the pectinesterase family.

The enzyme catalyses [(1-&gt;4)-alpha-D-galacturonosyl methyl ester](n) + n H2O = [(1-&gt;4)-alpha-D-galacturonosyl](n) + n methanol + n H(+). It functions in the pathway glycan metabolism; pectin degradation; 2-dehydro-3-deoxy-D-gluconate from pectin: step 1/5. The sequence is that of Pectinesterase B (pemB) from Pectobacterium parmentieri.